The chain runs to 260 residues: Hydroxyacylglutathione hydrolase (260 aa).

Positions 61, 63, 65, 66, 119, 138, and 176 each coordinate Zn(2+).

This sequence belongs to the metallo-beta-lactamase superfamily. Glyoxalase II family. In terms of assembly, monomer. Zn(2+) serves as cofactor.

It carries out the reaction an S-(2-hydroxyacyl)glutathione + H2O = a 2-hydroxy carboxylate + glutathione + H(+). It participates in secondary metabolite metabolism; methylglyoxal degradation; (R)-lactate from methylglyoxal: step 2/2. Its function is as follows. Thiolesterase that catalyzes the hydrolysis of S-D-lactoyl-glutathione to form glutathione and D-lactic acid. The sequence is that of Hydroxyacylglutathione hydrolase from Brucella suis (strain ATCC 23445 / NCTC 10510).